Consider the following 61-residue polypeptide: Overexpressed in colon carcinoma 1 protein homolog (61 aa).

Positions 1-13 (MGCGNSTAASTTP) are enriched in polar residues. The disordered stretch occupies residues 1–61 (MGCGNSTAAS…AGQTASTHKE (61 aa)). The span at 18-34 (SAKDVQDDSSMDEEKRR) shows a compositional bias: basic and acidic residues. Residues 48–61 (TNETAGQTASTHKE) are compositionally biased toward polar residues.

Belongs to the OCC1 family.

The sequence is that of Overexpressed in colon carcinoma 1 protein homolog (si:dkey-261e22.4) from Danio rerio (Zebrafish).